Here is a 139-residue protein sequence, read N- to C-terminus: ATP synthase epsilon chain 2 (139 aa).

This sequence belongs to the ATPase epsilon chain family. As to quaternary structure, F-type ATPases have 2 components, CF(1) - the catalytic core - and CF(0) - the membrane proton channel. CF(1) has five subunits: alpha(3), beta(3), gamma(1), delta(1), epsilon(1). CF(0) has three main subunits: a, b and c.

It localises to the cell inner membrane. Functionally, produces ATP from ADP in the presence of a proton gradient across the membrane. This chain is ATP synthase epsilon chain 2 (atpC2), found in Ralstonia nicotianae (strain ATCC BAA-1114 / GMI1000) (Ralstonia solanacearum).